A 455-amino-acid polypeptide reads, in one-letter code: tRNA-2-methylthio-N(6)-dimethylallyladenosine synthase (455 aa).

Residues 18-133 (KKLFIETYGC…LPELIAAVEA (116 aa)) enclose the MTTase N-terminal domain. [4Fe-4S] cluster is bound by residues Cys-27, Cys-63, Cys-97, Cys-171, Cys-175, and Cys-178. The Radical SAM core domain occupies 157–390 (CGNHISGFVS…IALQNRLSAE (234 aa)). Residues 393–455 (QRCIGKTYEV…SSATLKGEEV (63 aa)) enclose the TRAM domain.

Belongs to the methylthiotransferase family. MiaB subfamily. Monomer. The cofactor is [4Fe-4S] cluster.

Its subcellular location is the cytoplasm. The catalysed reaction is N(6)-dimethylallyladenosine(37) in tRNA + (sulfur carrier)-SH + AH2 + 2 S-adenosyl-L-methionine = 2-methylsulfanyl-N(6)-dimethylallyladenosine(37) in tRNA + (sulfur carrier)-H + 5'-deoxyadenosine + L-methionine + A + S-adenosyl-L-homocysteine + 2 H(+). In terms of biological role, catalyzes the methylthiolation of N6-(dimethylallyl)adenosine (i(6)A), leading to the formation of 2-methylthio-N6-(dimethylallyl)adenosine (ms(2)i(6)A) at position 37 in tRNAs that read codons beginning with uridine. In Bacteroides thetaiotaomicron (strain ATCC 29148 / DSM 2079 / JCM 5827 / CCUG 10774 / NCTC 10582 / VPI-5482 / E50), this protein is tRNA-2-methylthio-N(6)-dimethylallyladenosine synthase.